The primary structure comprises 555 residues: GPI-anchor transamidase component PIGS (555 aa).

The Cytoplasmic portion of the chain corresponds to 2–18; sequence AATGAAATDLEVVRGKR. Arginine 15 and arginine 18 together coordinate a cardiolipin. Residues 19-39 form a helical membrane-spanning segment; the sequence is AALFFATVVIVLGLPLWWKTT. Residues 40–517 lie on the Lumenal side of the membrane; it reads ETYRAPLPYS…LHLLYFPDDQ (478 aa). N-linked (GlcNAc...) asparagine glycans are attached at residues asparagine 267 and asparagine 370. The chain crosses the membrane as a helical span at residues 518-532; sequence KFAIYIPLFLPMAVP. Topologically, residues 533 to 555 are cytoplasmic; the sequence is ILLSLFKIFLETRKSWKKPEKTD.

This sequence belongs to the PIGS family. In terms of assembly, heteropentamer. Part of the GPI-anchor transamidase complex, consisting of PIGK, PIGT, PIGS, PIGU and GAA1.

The protein resides in the endoplasmic reticulum membrane. Its pathway is glycolipid biosynthesis; glycosylphosphatidylinositol-anchor biosynthesis. Its function is as follows. Component of the glycosylphosphatidylinositol-anchor (GPI-anchor) transamidase (GPI-T) complex that catalyzes the formation of the linkage between a proprotein and a GPI-anchor and participates in GPI anchored protein biosynthesis. This is GPI-anchor transamidase component PIGS from Bos taurus (Bovine).